The sequence spans 614 residues: MLDFVVIFTKGGVVLWHSNASGNSFASCINSLIRGVILEERNTEAKYYEEDHLAVQFKLDNELDLVYAAIFQKVIKLNYLDGFLADMQAAFKEKYGDIRLGDDYDFDREYRRVLSAAEEASAKQVKAPKTMRSYNESQKSKKTVASMIQDDKKPVEKRVNIQEAPPPSKSQPSSPPTGSPMDKIIMEKRRKLREKLTPTKKTSPSDSKSSKPEKAGKKPRVWDLGGNSKDAALLDRSRDSPDDVQYQNINSELVGTMQGVIRDLDVESEDEADNEDASSEGEAEEQVQSKKGKRGGLLSYFKGIVGAKTMSLADLQPALEKMRDHLISKNVASEIAAKLCDSVAASLDGKQMGTFDSIASQVKEALTESLVRILSPKRRIDIIRDALESKRNGRPYTIIFCGVNGVGKSTNLAKICFWLIENDFNVLIAACDTFRAGAVEQLRTHTRHLNALHPAAKHDGRNMVQLYEKGYGKDAAGIAMEAIKFAHDTRVDVVLVDTAGRMQDNEPLMRSLSKLIKVNNPDLVLFVGEALVGNEAVDQLVKFNQSLADYSSNENPHIIDGIVLTKFDTIDDKVGAAISMTYITGQPIVFVGTGQTYADLKAINVNAVVNSLMK.

Residues 119 to 244 are disordered; sequence EASAKQVKAP…DRSRDSPDDV (126 aa). A compositionally biased stretch (basic and acidic residues) spans 149–160; the sequence is QDDKKPVEKRVN. Residues 164-178 show a composition bias toward pro residues; the sequence is APPPSKSQPSSPPTG. The segment covering 232–241 has biased composition (basic and acidic residues); sequence ALLDRSRDSP. 2 positions are modified to phosphoserine: serine 237 and serine 240. A Phosphotyrosine modification is found at tyrosine 246. Phosphoserine occurs at positions 268, 278, and 279. Residues 268-285 show a composition bias toward acidic residues; sequence SEDEADNEDASSEGEAEE. The disordered stretch occupies residues 268-290; it reads SEDEADNEDASSEGEAEEQVQSK. Residues 396-613 are NG domain; it reads YTIIFCGVNG…NVNAVVNSLM (218 aa). GTP-binding positions include 402–409, 497–501, and 565–568; these read GVNGVGKS, DTAGR, and TKFD.

This sequence belongs to the GTP-binding SRP family. As to quaternary structure, heterodimer of SrpRalpha and SrpRbeta. In 8-9 hours embryos, expression is seen in a segmental pattern along embryonic ventral midline.

The protein localises to the endoplasmic reticulum membrane. In terms of biological role, component of the SRP (signal recognition particle) receptor. Ensures, in conjunction with the signal recognition particle, the correct targeting of the nascent secretory proteins to the endoplasmic reticulum membrane system. Forms a guanosine 5'-triphosphate (GTP)-dependent complex with the SRP subunit Srp54. SRP receptor compaction and GTPase rearrangement drive SRP-mediated cotranslational protein translocation into the ER. May have a role in axonogenesis. This Drosophila melanogaster (Fruit fly) protein is Signal recognition particle receptor subunit alpha homolog.